A 379-amino-acid chain; its full sequence is Epoxyqueuosine reductase (379 aa).

Asp-139 functions as the Proton donor in the catalytic mechanism. Residues 181–213 (IPLPVDQPVEEGCGKCVACMTICPTGAIVEPYT) form the 4Fe-4S ferredoxin-type domain. [4Fe-4S] cluster contacts are provided by Cys-193, Cys-196, Cys-199, Cys-203, Cys-219, Cys-246, Cys-249, and Cys-253.

This sequence belongs to the QueG family. In terms of assembly, monomer. It depends on cob(II)alamin as a cofactor. [4Fe-4S] cluster is required as a cofactor.

The protein localises to the cytoplasm. The enzyme catalyses epoxyqueuosine(34) in tRNA + AH2 = queuosine(34) in tRNA + A + H2O. It functions in the pathway tRNA modification; tRNA-queuosine biosynthesis. Functionally, catalyzes the conversion of epoxyqueuosine (oQ) to queuosine (Q), which is a hypermodified base found in the wobble positions of tRNA(Asp), tRNA(Asn), tRNA(His) and tRNA(Tyr). The sequence is that of Epoxyqueuosine reductase from Escherichia coli (strain K12).